The primary structure comprises 239 residues: tRNA (guanine-N(7)-)-methyltransferase (239 aa).

S-adenosyl-L-methionine-binding residues include Glu69, Glu94, Asp121, and Asp144. Asp144 is an active-site residue. Lys148 is a binding site for substrate. Positions 150 to 155 are interaction with RNA; it reads RHNKRR. Substrate contacts are provided by residues Asp180 and 217 to 220; that span reads TKFE.

This sequence belongs to the class I-like SAM-binding methyltransferase superfamily. TrmB family. In terms of assembly, monomer.

It carries out the reaction guanosine(46) in tRNA + S-adenosyl-L-methionine = N(7)-methylguanosine(46) in tRNA + S-adenosyl-L-homocysteine. The protein operates within tRNA modification; N(7)-methylguanine-tRNA biosynthesis. In terms of biological role, catalyzes the formation of N(7)-methylguanine at position 46 (m7G46) in tRNA. This is tRNA (guanine-N(7)-)-methyltransferase from Escherichia coli O6:K15:H31 (strain 536 / UPEC).